The sequence spans 460 residues: UDP-N-acetylmuramoylalanine--D-glutamate ligase (460 aa).

Residue 117–123 (GTNGKTT) coordinates ATP.

The protein belongs to the MurCDEF family.

The protein localises to the cytoplasm. The catalysed reaction is UDP-N-acetyl-alpha-D-muramoyl-L-alanine + D-glutamate + ATP = UDP-N-acetyl-alpha-D-muramoyl-L-alanyl-D-glutamate + ADP + phosphate + H(+). The protein operates within cell wall biogenesis; peptidoglycan biosynthesis. In terms of biological role, cell wall formation. Catalyzes the addition of glutamate to the nucleotide precursor UDP-N-acetylmuramoyl-L-alanine (UMA). This Prochlorococcus marinus (strain MIT 9313) protein is UDP-N-acetylmuramoylalanine--D-glutamate ligase.